Reading from the N-terminus, the 518-residue chain is Chromosomal replication initiator protein DnaA (518 aa).

Residues 1 to 76 (METDGGDFPS…RALSEAYGSP (76 aa)) form a domain I, interacts with DnaA modulators region. Residues 76–176 (PIRLAVTVDP…RRPTTRIENS (101 aa)) are domain II. A disordered region spans residues 91–174 (LTPERTGEHS…QPRRPTTRIE (84 aa)). Positions 124–135 (DGLHLDERRSGS) are enriched in basic and acidic residues. The segment covering 136–147 (LEEDSPLDDSDP) has biased composition (acidic residues). Positions 177–393 (RLNPKYIFET…GALIRVTAFA (217 aa)) are domain III, AAA+ region. The ATP site is built by Gly221, Gly223, Lys224, and Thr225. The tract at residues 394-518 (SLNRQPVDMQ…TNRIKKQSGA (125 aa)) is domain IV, binds dsDNA.

The protein belongs to the DnaA family. Oligomerizes as a right-handed, spiral filament on DNA at oriC.

Its subcellular location is the cytoplasm. Functionally, plays an essential role in the initiation and regulation of chromosomal replication. ATP-DnaA binds to the origin of replication (oriC) to initiate formation of the DNA replication initiation complex once per cell cycle. Binds the DnaA box (a 9 base pair repeat at the origin) and separates the double-stranded (ds)DNA. Forms a right-handed helical filament on oriC DNA; dsDNA binds to the exterior of the filament while single-stranded (ss)DNA is stabiized in the filament's interior. The ATP-DnaA-oriC complex binds and stabilizes one strand of the AT-rich DNA unwinding element (DUE), permitting loading of DNA polymerase. After initiation quickly degrades to an ADP-DnaA complex that is not apt for DNA replication. Binds acidic phospholipids. The protein is Chromosomal replication initiator protein DnaA of Kineococcus radiotolerans (strain ATCC BAA-149 / DSM 14245 / SRS30216).